The primary structure comprises 461 residues: UDP-N-acetylmuramoylalanine--D-glutamate ligase (461 aa).

123-129 is a binding site for ATP; the sequence is GTNGKTT.

This sequence belongs to the MurCDEF family.

It is found in the cytoplasm. It carries out the reaction UDP-N-acetyl-alpha-D-muramoyl-L-alanine + D-glutamate + ATP = UDP-N-acetyl-alpha-D-muramoyl-L-alanyl-D-glutamate + ADP + phosphate + H(+). The protein operates within cell wall biogenesis; peptidoglycan biosynthesis. Functionally, cell wall formation. Catalyzes the addition of glutamate to the nucleotide precursor UDP-N-acetylmuramoyl-L-alanine (UMA). The sequence is that of UDP-N-acetylmuramoylalanine--D-glutamate ligase from Natranaerobius thermophilus (strain ATCC BAA-1301 / DSM 18059 / JW/NM-WN-LF).